Reading from the N-terminus, the 77-residue chain is Secapin-2 (77 aa).

Positions 1 to 32 (MKNYSKNATYLITVLLFSFVTMLLIIPSKCEA) are cleaved as a signal peptide. The propeptide occupies 33-52 (VSNDMQPLEARTADLVQQPR). Cys-61 and Cys-72 are oxidised to a cystine. At Pro-77 the chain carries Proline amide.

The protein belongs to the secapin family. As to expression, expressed by the venom gland.

The protein localises to the secreted. Functionally, serine protease inhibitor which exhibits antifibrinolytic, antielastolytic and antimicrobial activities. Displays antimicrobial activity against bacteria and fungi. Likely functions in the innate immune response to microbial infection and possibly in the venom, as an antifibrinolytic agent. Induces hyperalgesia and edema mediated by leukotrienes when injected into mice. Does not induce hemolytic activity, mast cell degranulation, or chemotactic activity for polymorphonucleated leukocytes (PMNL). This is Secapin-2 from Apis mellifera (Honeybee).